A 239-amino-acid polypeptide reads, in one-letter code: tRNA pseudouridine synthase C (239 aa).

Residue Asp-54 is part of the active site.

Belongs to the pseudouridine synthase RluA family.

It carries out the reaction uridine(65) in tRNA = pseudouridine(65) in tRNA. Responsible for synthesis of pseudouridine from uracil-65 in transfer RNAs. This is tRNA pseudouridine synthase C (truC) from Haemophilus influenzae (strain ATCC 51907 / DSM 11121 / KW20 / Rd).